A 527-amino-acid chain; its full sequence is 4-alpha-glucanotransferase (527 aa).

The protein belongs to the disproportionating enzyme family.

It localises to the cytoplasm. It carries out the reaction Transfers a segment of a (1-&gt;4)-alpha-D-glucan to a new position in an acceptor, which may be glucose or a (1-&gt;4)-alpha-D-glucan.. The sequence is that of 4-alpha-glucanotransferase (malQ) from Chlamydia trachomatis serovar D (strain ATCC VR-885 / DSM 19411 / UW-3/Cx).